Reading from the N-terminus, the 78-residue chain is Large ribosomal subunit protein bL28 (78 aa).

Residues 1 to 21 (MSRVCQVTGKSPITGNNVSHA) form a disordered region. Polar residues predominate over residues 8-21 (TGKSPITGNNVSHA).

Belongs to the bacterial ribosomal protein bL28 family.

This chain is Large ribosomal subunit protein bL28, found in Hahella chejuensis (strain KCTC 2396).